The following is a 288-amino-acid chain: DegV domain-containing protein DR_1903 (288 aa).

Residues 2-280 form the DegV domain; the sequence is IAVTTESTAD…PGVVAVLAFP (279 aa). Hexadecanoate is bound by residues Thr-59 and Thr-93.

In terms of biological role, may bind long-chain fatty acids, such as palmitate, and may play a role in lipid transport or fatty acid metabolism. The polypeptide is DegV domain-containing protein DR_1903 (Deinococcus radiodurans (strain ATCC 13939 / DSM 20539 / JCM 16871 / CCUG 27074 / LMG 4051 / NBRC 15346 / NCIMB 9279 / VKM B-1422 / R1)).